Consider the following 291-residue polypeptide: Glutathione S-transferase 2 (291 aa).

Residues 2 to 83 enclose the GST N-terminal domain; sequence SPVKVFGHPM…YILRKYGGTA (82 aa). Glutathione contacts are provided by residues 41–42, 54–55, and 67–68; these read HK, KM, and KS. The 131-residue stretch at 93–223 folds into the GST C-terminal domain; the sequence is GIEELAMVDV…RVCKHMPTEF (131 aa).

It belongs to the GST superfamily. Phi family.

It catalyses the reaction RX + glutathione = an S-substituted glutathione + a halide anion + H(+). Functionally, conjugation of reduced glutathione to a wide number of exogenous and endogenous hydrophobic electrophiles. This is Glutathione S-transferase 2 (GSTA2) from Triticum aestivum (Wheat).